Consider the following 297-residue polypeptide: UDP-N-acetylenolpyruvoylglucosamine reductase (297 aa).

The FAD-binding PCMH-type domain maps to lysine 26–glycine 191. Residue arginine 171 is part of the active site. Serine 220 functions as the Proton donor in the catalytic mechanism. Glutamate 290 is a catalytic residue.

The protein belongs to the MurB family. Requires FAD as cofactor.

It is found in the cytoplasm. The enzyme catalyses UDP-N-acetyl-alpha-D-muramate + NADP(+) = UDP-N-acetyl-3-O-(1-carboxyvinyl)-alpha-D-glucosamine + NADPH + H(+). The protein operates within cell wall biogenesis; peptidoglycan biosynthesis. Functionally, cell wall formation. This is UDP-N-acetylenolpyruvoylglucosamine reductase from Novosphingobium aromaticivorans (strain ATCC 700278 / DSM 12444 / CCUG 56034 / CIP 105152 / NBRC 16084 / F199).